Reading from the N-terminus, the 329-residue chain is tRNA dimethylallyltransferase (329 aa).

Residue 12-19 (GPTSVGKT) coordinates ATP. 14–19 (TSVGKT) provides a ligand contact to substrate. The tract at residues 37–40 (DSRY) is interaction with substrate tRNA. Positions 306 to 329 (LREESDEGDVAVHQSGGGKEAPRA) are disordered. The span at 320–329 (SGGGKEAPRA) shows a compositional bias: gly residues.

Belongs to the IPP transferase family. As to quaternary structure, monomer. Mg(2+) is required as a cofactor.

It carries out the reaction adenosine(37) in tRNA + dimethylallyl diphosphate = N(6)-dimethylallyladenosine(37) in tRNA + diphosphate. Its function is as follows. Catalyzes the transfer of a dimethylallyl group onto the adenine at position 37 in tRNAs that read codons beginning with uridine, leading to the formation of N6-(dimethylallyl)adenosine (i(6)A). This chain is tRNA dimethylallyltransferase, found in Thermomicrobium roseum (strain ATCC 27502 / DSM 5159 / P-2).